A 595-amino-acid chain; its full sequence is NAD-dependent protein deacetylase hst4 (595 aa).

The interval 1-106 (MAPRKTKPAT…HLDLTPRLGF (106 aa)) is disordered. The segment covering 9–32 (ATKPAAKPTPASTATTSSCPSPKS) has biased composition (low complexity). The region spanning 109–428 (YGDQEPQLNL…SADVERVKNE (320 aa)) is the Deacetylase sirtuin-type domain. NAD(+) is bound by residues 134 to 153 (GAGI…DGLF) and 222 to 225 (QNID). Histidine 253 (proton acceptor) is an active-site residue. The Zn(2+) site is built by cysteine 261, cysteine 264, cysteine 283, and cysteine 286. Residues 342–344 (GTS), 373–375 (NNE), and cysteine 394 contribute to the NAD(+) site. Residues 445-473 (QAQTGMLTPSSSYDGDVENASTTTLSNPA) are compositionally biased toward polar residues. A disordered region spans residues 445-595 (QAQTGMLTPS…IPKGMGKLLD (151 aa)). 2 stretches are compositionally biased toward basic and acidic residues: residues 478 to 492 (KLTE…DAPK) and 530 to 543 (TPEE…EHKA).

It belongs to the sirtuin family. Class I subfamily. Zn(2+) is required as a cofactor.

Its subcellular location is the nucleus. It carries out the reaction N(6)-acetyl-L-lysyl-[protein] + NAD(+) + H2O = 2''-O-acetyl-ADP-D-ribose + nicotinamide + L-lysyl-[protein]. Functionally, NAD-dependent histone deacetylase, which could function in telomeric silencing, cell cycle progression and chromosome stability. The sequence is that of NAD-dependent protein deacetylase hst4 from Emericella nidulans (strain FGSC A4 / ATCC 38163 / CBS 112.46 / NRRL 194 / M139) (Aspergillus nidulans).